Reading from the N-terminus, the 108-residue chain is Nucleoid-associated protein BTH_I2220 (108 aa).

It belongs to the YbaB/EbfC family. Homodimer.

Its subcellular location is the cytoplasm. It is found in the nucleoid. Its function is as follows. Binds to DNA and alters its conformation. May be involved in regulation of gene expression, nucleoid organization and DNA protection. The chain is Nucleoid-associated protein BTH_I2220 from Burkholderia thailandensis (strain ATCC 700388 / DSM 13276 / CCUG 48851 / CIP 106301 / E264).